The chain runs to 59 residues: Large ribosomal subunit protein uL30 (59 aa).

Belongs to the universal ribosomal protein uL30 family. Part of the 50S ribosomal subunit.

This Enterococcus faecalis (strain ATCC 700802 / V583) protein is Large ribosomal subunit protein uL30.